Consider the following 508-residue polypeptide: MKLAYWMYAGPAHIGTLRVATSFKNVHAIMHAPLGDDYFNVMRSMLSRERDFTPVTTSVVDRHVLARGSQEKVVENITRKDAEEHPDLIVLTPTCTSSILQEDLENFVERAQLDAKGDVLLADVNHYRVNELQAGDRTLHQIVQYYIEKARKKGELPEGKTAKPSVNIIGISTLGFHNNHDCTELKRLMADLGIEVNAVIPEGASVHELKNLPRAWFNLVPYRELGLMTASYLEKEFGTPCIDIVPMGVVETARCIRKIQEVINAQGADVNYEEYINEQTLYVSQAAWFSRSIDCQNLTGKKAVVFGDNTHAAALTKILSREMGIHVVWAGTYCKYDADWFREQVSEYCDEVLITEDHGEIGDAIARVEPSAIFGTQMERHVGKRLDIPCGVIAAPIHVQNFPIGYKPFLGYEGTNQITDLIYNSFTLGMEDHLLEIFGGHDTKEVITKGISAESDLSWTKDGLAELNKIPGFVRGKVKRNTEKFARDRGFKDISAEVLYAAKEAVGA.

Asp36 contacts [4Fe-4S] cluster. Catalysis depends on Asp294, which acts as the Proton donor. Gly429 to Met430 is a binding site for substrate.

The protein belongs to the ChlB/BchB/BchZ family. Protochlorophyllide reductase is composed of three subunits; ChlL, ChlN and ChlB. Forms a heterotetramer of two ChlB and two ChlN subunits. It depends on [4Fe-4S] cluster as a cofactor.

It catalyses the reaction chlorophyllide a + oxidized 2[4Fe-4S]-[ferredoxin] + 2 ADP + 2 phosphate = protochlorophyllide a + reduced 2[4Fe-4S]-[ferredoxin] + 2 ATP + 2 H2O. It participates in porphyrin-containing compound metabolism; chlorophyll biosynthesis (light-independent). Its function is as follows. Component of the dark-operative protochlorophyllide reductase (DPOR) that uses Mg-ATP and reduced ferredoxin to reduce ring D of protochlorophyllide (Pchlide) to form chlorophyllide a (Chlide). This reaction is light-independent. The NB-protein (ChlN-ChlB) is the catalytic component of the complex. This Trichormus variabilis (strain ATCC 29413 / PCC 7937) (Anabaena variabilis) protein is Light-independent protochlorophyllide reductase subunit B.